Reading from the N-terminus, the 432-residue chain is Adenylosuccinate synthetase (432 aa).

GTP-binding positions include 12–18 (GDEGKGK) and 40–42 (GHT). Asp-13 serves as the catalytic Proton acceptor. Residues Asp-13 and Gly-40 each coordinate Mg(2+). Residues 13–16 (DEGK), 38–41 (NAGH), Thr-130, Arg-144, Gln-226, Thr-241, and Arg-305 contribute to the IMP site. The active-site Proton donor is His-41. Residue 301–307 (STTGRSR) coordinates substrate. GTP is bound by residues Arg-307, 333-335 (KLD), and 415-417 (SVG).

The protein belongs to the adenylosuccinate synthetase family. In terms of assembly, homodimer. The cofactor is Mg(2+).

Its subcellular location is the cytoplasm. The enzyme catalyses IMP + L-aspartate + GTP = N(6)-(1,2-dicarboxyethyl)-AMP + GDP + phosphate + 2 H(+). Its pathway is purine metabolism; AMP biosynthesis via de novo pathway; AMP from IMP: step 1/2. In terms of biological role, plays an important role in the de novo pathway of purine nucleotide biosynthesis. Catalyzes the first committed step in the biosynthesis of AMP from IMP. The chain is Adenylosuccinate synthetase from Bdellovibrio bacteriovorus (strain ATCC 15356 / DSM 50701 / NCIMB 9529 / HD100).